Here is a 542-residue protein sequence, read N- to C-terminus: Putative cysteine ligase BshC (542 aa).

Positions 458-479 (LTKNATLLQAQIDFLHQTLQRA) form a coiled coil.

This sequence belongs to the BshC family.

In terms of biological role, involved in bacillithiol (BSH) biosynthesis. May catalyze the last step of the pathway, the addition of cysteine to glucosamine malate (GlcN-Mal) to generate BSH. The polypeptide is Putative cysteine ligase BshC (Geobacillus sp. (strain WCH70)).